Here is a 231-residue protein sequence, read N- to C-terminus: ADP-ribose pyrophosphatase (231 aa).

F2 carries the N-acetylserine modification. Substrate contacts are provided by residues W46, W64–D65, R69, and R103. One can recognise a Nudix hydrolase domain in the interval G75–R214. A Mg(2+)-binding site is contributed by A115. The Nudix box signature appears at G116–G137. L117 is a substrate binding site. Residues E131 and E135 each coordinate Mg(2+). D152 is a substrate binding site. Position 185 (E185) interacts with Mg(2+).

This sequence belongs to the Nudix hydrolase family. NudF subfamily. It depends on Mg(2+) as a cofactor. Requires Mn(2+) as cofactor.

The catalysed reaction is ADP-D-ribose + H2O = D-ribose 5-phosphate + AMP + 2 H(+). The chain is ADP-ribose pyrophosphatase (YSA1) from Saccharomyces cerevisiae (strain ATCC 204508 / S288c) (Baker's yeast).